A 152-amino-acid polypeptide reads, in one-letter code: D-aminoacyl-tRNA deacylase (152 aa).

The Gly-cisPro motif, important for rejection of L-amino acids motif lies at 137–138 (GP).

Belongs to the DTD family. As to quaternary structure, homodimer.

The protein localises to the cytoplasm. It carries out the reaction glycyl-tRNA(Ala) + H2O = tRNA(Ala) + glycine + H(+). It catalyses the reaction a D-aminoacyl-tRNA + H2O = a tRNA + a D-alpha-amino acid + H(+). Functionally, an aminoacyl-tRNA editing enzyme that deacylates mischarged D-aminoacyl-tRNAs. Also deacylates mischarged glycyl-tRNA(Ala), protecting cells against glycine mischarging by AlaRS. Acts via tRNA-based rather than protein-based catalysis; rejects L-amino acids rather than detecting D-amino acids in the active site. By recycling D-aminoacyl-tRNA to D-amino acids and free tRNA molecules, this enzyme counteracts the toxicity associated with the formation of D-aminoacyl-tRNA entities in vivo and helps enforce protein L-homochirality. The sequence is that of D-aminoacyl-tRNA deacylase from Aromatoleum aromaticum (strain DSM 19018 / LMG 30748 / EbN1) (Azoarcus sp. (strain EbN1)).